Reading from the N-terminus, the 95-residue chain is MLKKNKKANSNNSNATAYSPLAYLKRPYFKRSKACPLEQCPNEDIDYKNKTLLSKFTSEYGRILPSRITSVSSRKQRLLSTAVKRARYLALLPYC.

Belongs to the bacterial ribosomal protein bS18 family. Part of the 30S ribosomal subunit. Forms a tight heterodimer with protein bS6.

Functionally, binds as a heterodimer with protein bS6 to the central domain of the 16S rRNA, where it helps stabilize the platform of the 30S subunit. The sequence is that of Small ribosomal subunit protein bS18 from Ehrlichia canis (strain Jake).